We begin with the raw amino-acid sequence, 141 residues long: Large ribosomal subunit protein uL11c (141 aa).

The protein belongs to the universal ribosomal protein uL11 family. In terms of assembly, part of the ribosomal stalk of the 50S ribosomal subunit. Interacts with L10 and the large rRNA to form the base of the stalk. L10 forms an elongated spine to which L12 dimers bind in a sequential fashion forming a multimeric L10(L12)X complex.

The protein resides in the plastid. Its subcellular location is the chloroplast. In terms of biological role, forms part of the ribosomal stalk which helps the ribosome interact with GTP-bound translation factors. The sequence is that of Large ribosomal subunit protein uL11c from Cyanidium caldarium (Red alga).